Here is a 499-residue protein sequence, read N- to C-terminus: Importin subunit alpha-8 (499 aa).

Positions 1–57 constitute an IBB domain; sequence MATSKAPKERLKNYKYRGKEMSLPRQQRIASSLQLRKTRKDEQVLKRRNIDLFSSDM. ARM repeat units follow at residues 101 to 141, 144 to 183, 186 to 226, 229 to 268, 271 to 310, 313 to 352, 354 to 393, and 397 to 436; these read TPPL…NIAS, SEQT…NIAG, AEFR…NLCR, DPYP…YLTK, KEYI…NIVA, DEQT…NVAA, PRHQ…NIAT, and QDQL…YLLQ.

Belongs to the importin alpha family. In terms of assembly, binds to importin subunit beta-1/KPNB1 via the IBB domain; this complex dissociates in the presence of RAN-GTP. Shows a limited binding to the RB1 nuclear localization signal (NLS), but not to the SV40, nor NPM1 NLSs. Interacts with RSL1D1. In terms of tissue distribution, expressed predominantly in ovary. Isoform 1 is the predominant form.

The protein localises to the nucleus. Its function is as follows. Functions in nuclear protein import. In Mus musculus (Mouse), this protein is Importin subunit alpha-8 (Kpna7).